The primary structure comprises 201 residues: Recombination protein RecR (201 aa).

Residues 57–72 form a C4-type zinc finger; that stretch reads CTHCRTFTEEESCAIC. The Toprim domain maps to 81–176; the sequence is GFLCVVEQPS…KVSRIAHGIP (96 aa).

Belongs to the RecR family.

Its function is as follows. May play a role in DNA repair. It seems to be involved in an RecBC-independent recombinational process of DNA repair. It may act with RecF and RecO. The sequence is that of Recombination protein RecR from Histophilus somni (strain 129Pt) (Haemophilus somnus).